The primary structure comprises 61 residues: Odorranain-A6 (61 aa).

The signal sequence occupies residues 1 to 22 (MFSMKKSLLLLFFLGTISLSLC). The propeptide occupies 23 to 45 (EQERDAEEEEGSENGAEDIKINR).

Belongs to the frog skin active peptide (FSAP) family. Brevinin subfamily. In terms of tissue distribution, expressed by the skin glands.

Its subcellular location is the secreted. The chain is Odorranain-A6 from Odorrana hainanensis (Odor frog).